The sequence spans 515 residues: 2,3-bisphosphoglycerate-independent phosphoglycerate mutase (515 aa).

Residues Asp-14 and Ser-64 each coordinate Mn(2+). Catalysis depends on Ser-64, which acts as the Phosphoserine intermediate. Substrate-binding positions include His-125, 155 to 156 (RD), Arg-187, Arg-193, 263 to 266 (RADR), and Lys-337. 5 residues coordinate Mn(2+): Asp-404, His-408, Asp-445, His-446, and His-464.

The protein belongs to the BPG-independent phosphoglycerate mutase family. As to quaternary structure, monomer. Mn(2+) is required as a cofactor.

It carries out the reaction (2R)-2-phosphoglycerate = (2R)-3-phosphoglycerate. The protein operates within carbohydrate degradation; glycolysis; pyruvate from D-glyceraldehyde 3-phosphate: step 3/5. Its function is as follows. Catalyzes the interconversion of 2-phosphoglycerate and 3-phosphoglycerate. This Cronobacter sakazakii (strain ATCC BAA-894) (Enterobacter sakazakii) protein is 2,3-bisphosphoglycerate-independent phosphoglycerate mutase.